A 552-amino-acid polypeptide reads, in one-letter code: Arginine--tRNA ligase (552 aa).

The 'HIGH' region signature appears at 129–139; sequence ANPTGPVTLAS.

The protein belongs to the class-I aminoacyl-tRNA synthetase family. As to quaternary structure, monomer.

It localises to the cytoplasm. It catalyses the reaction tRNA(Arg) + L-arginine + ATP = L-arginyl-tRNA(Arg) + AMP + diphosphate. In Frankia alni (strain DSM 45986 / CECT 9034 / ACN14a), this protein is Arginine--tRNA ligase.